We begin with the raw amino-acid sequence, 500 residues long: Glycerol kinase (500 aa).

ADP is bound at residue Thr-12. Residues Thr-12, Thr-13, and Ser-14 each coordinate ATP. Thr-12 serves as a coordination point for sn-glycerol 3-phosphate. ADP is bound at residue Arg-16. Sn-glycerol 3-phosphate is bound by residues Arg-82, Glu-83, Tyr-134, and Asp-246. 5 residues coordinate glycerol: Arg-82, Glu-83, Tyr-134, Asp-246, and Gln-247. Thr-268 and Gly-312 together coordinate ADP. ATP-binding residues include Thr-268, Gly-312, Gln-316, and Gly-413. Residues Gly-413 and Asn-417 each coordinate ADP.

It belongs to the FGGY kinase family.

It catalyses the reaction glycerol + ATP = sn-glycerol 3-phosphate + ADP + H(+). It functions in the pathway polyol metabolism; glycerol degradation via glycerol kinase pathway; sn-glycerol 3-phosphate from glycerol: step 1/1. Its activity is regulated as follows. Inhibited by fructose 1,6-bisphosphate (FBP). In terms of biological role, key enzyme in the regulation of glycerol uptake and metabolism. Catalyzes the phosphorylation of glycerol to yield sn-glycerol 3-phosphate. This Saccharopolyspora erythraea (strain ATCC 11635 / DSM 40517 / JCM 4748 / NBRC 13426 / NCIMB 8594 / NRRL 2338) protein is Glycerol kinase.